A 175-amino-acid chain; its full sequence is Putative transmembrane protein ORF175 (175 aa).

4 helical membrane-spanning segments follow: residues leucine 14–methionine 34, valine 58–phenylalanine 78, isoleucine 101–phenylalanine 121, and isoleucine 142–isoleucine 162.

The protein localises to the host membrane. The chain is Putative transmembrane protein ORF175 from Acidianus two-tailed virus (ATV).